The primary structure comprises 118 residues: Small ribosomal subunit protein uS13 (118 aa).

Residues 94–118 (SLPLRGQRTKTNARTRKGPRKPIKK) form a disordered region.

The protein belongs to the universal ribosomal protein uS13 family. As to quaternary structure, part of the 30S ribosomal subunit. Forms a loose heterodimer with protein S19. Forms two bridges to the 50S subunit in the 70S ribosome.

Functionally, located at the top of the head of the 30S subunit, it contacts several helices of the 16S rRNA. In the 70S ribosome it contacts the 23S rRNA (bridge B1a) and protein L5 of the 50S subunit (bridge B1b), connecting the 2 subunits; these bridges are implicated in subunit movement. Contacts the tRNAs in the A and P-sites. The chain is Small ribosomal subunit protein uS13 from Idiomarina loihiensis (strain ATCC BAA-735 / DSM 15497 / L2-TR).